We begin with the raw amino-acid sequence, 106 residues long: MANLNDWLNLEPLAEDQTRRAVKPPSLYSVILNNDDYTPMEFVIEVLQTFFAYDIERATQLMLTVHYKGKAVCGVFTAEVAETKVALINRYARDNEHPLLCTLEKA.

Belongs to the ClpS family. Binds to the N-terminal domain of the chaperone ClpA.

Functionally, involved in the modulation of the specificity of the ClpAP-mediated ATP-dependent protein degradation. This chain is ATP-dependent Clp protease adapter protein ClpS, found in Edwardsiella ictaluri (strain 93-146).